The primary structure comprises 101 residues: NAD(P)H-quinone oxidoreductase subunit 4L, chloroplastic (101 aa).

Transmembrane regions (helical) follow at residues 2-22 (MLEHIPVLSAYLFSIDIYGLI), 32-52 (MCLELILNAVNINFVTFSDFF), and 61-81 (IFSIFVIAIAAAEAAIGSAIV).

It belongs to the complex I subunit 4L family. In terms of assembly, NDH is composed of at least 16 different subunits, 5 of which are encoded in the nucleus.

The protein resides in the plastid. The protein localises to the chloroplast thylakoid membrane. The enzyme catalyses a plastoquinone + NADH + (n+1) H(+)(in) = a plastoquinol + NAD(+) + n H(+)(out). The catalysed reaction is a plastoquinone + NADPH + (n+1) H(+)(in) = a plastoquinol + NADP(+) + n H(+)(out). Its function is as follows. NDH shuttles electrons from NAD(P)H:plastoquinone, via FMN and iron-sulfur (Fe-S) centers, to quinones in the photosynthetic chain and possibly in a chloroplast respiratory chain. The immediate electron acceptor for the enzyme in this species is believed to be plastoquinone. Couples the redox reaction to proton translocation, and thus conserves the redox energy in a proton gradient. The polypeptide is NAD(P)H-quinone oxidoreductase subunit 4L, chloroplastic (Gossypium barbadense (Sea Island cotton)).